A 136-amino-acid chain; its full sequence is Large-conductance mechanosensitive channel (136 aa).

2 helical membrane passes run 10–30 (FAMRGNVVDLAVGVIIGAAFG) and 76–96 (GSFIQSVFDFVIVALAIFSAV).

It belongs to the MscL family. In terms of assembly, homopentamer.

The protein localises to the cell inner membrane. Its function is as follows. Channel that opens in response to stretch forces in the membrane lipid bilayer. May participate in the regulation of osmotic pressure changes within the cell. In Yersinia enterocolitica serotype O:8 / biotype 1B (strain NCTC 13174 / 8081), this protein is Large-conductance mechanosensitive channel.